The sequence spans 423 residues: Serine--tRNA ligase (423 aa).

Positions 107-130 (PHDSVPDGKSENDNREIRQWGAPP) are disordered. The segment covering 110-124 (SVPDGKSENDNREIR) has biased composition (basic and acidic residues). L-serine is bound at residue 231–233 (TGE). 262–264 (RSE) lines the ATP pocket. Position 285 (E285) interacts with L-serine. 349-352 (EISS) provides a ligand contact to ATP. L-serine is bound at residue S385.

The protein belongs to the class-II aminoacyl-tRNA synthetase family. Type-1 seryl-tRNA synthetase subfamily. Homodimer. The tRNA molecule binds across the dimer.

Its subcellular location is the cytoplasm. The enzyme catalyses tRNA(Ser) + L-serine + ATP = L-seryl-tRNA(Ser) + AMP + diphosphate + H(+). It catalyses the reaction tRNA(Sec) + L-serine + ATP = L-seryl-tRNA(Sec) + AMP + diphosphate + H(+). It functions in the pathway aminoacyl-tRNA biosynthesis; selenocysteinyl-tRNA(Sec) biosynthesis; L-seryl-tRNA(Sec) from L-serine and tRNA(Sec): step 1/1. In terms of biological role, catalyzes the attachment of serine to tRNA(Ser). Is also able to aminoacylate tRNA(Sec) with serine, to form the misacylated tRNA L-seryl-tRNA(Sec), which will be further converted into selenocysteinyl-tRNA(Sec). The sequence is that of Serine--tRNA ligase from Coxiella burnetii (strain Dugway 5J108-111).